A 152-amino-acid polypeptide reads, in one-letter code: Nucleoside diphosphate kinase (152 aa).

Positions 12, 60, 88, 94, 105, and 115 each coordinate ATP. The active-site Pros-phosphohistidine intermediate is H118.

This sequence belongs to the NDK family. In terms of assembly, homotrimer. It depends on Mg(2+) as a cofactor.

It carries out the reaction a 2'-deoxyribonucleoside 5'-diphosphate + ATP = a 2'-deoxyribonucleoside 5'-triphosphate + ADP. The catalysed reaction is a ribonucleoside 5'-diphosphate + ATP = a ribonucleoside 5'-triphosphate + ADP. In terms of biological role, major role in the synthesis of nucleoside triphosphates other than ATP. The ATP gamma phosphate is transferred to the NDP beta phosphate via a ping-pong mechanism, using a phosphorylated active-site intermediate. This Neurospora crassa (strain ATCC 24698 / 74-OR23-1A / CBS 708.71 / DSM 1257 / FGSC 987) protein is Nucleoside diphosphate kinase (ndk-1).